Here is a 281-residue protein sequence, read N- to C-terminus: MAGSPELVVLDPPWDKELAAGTESQALVSATPREDFRVRCTSKRAVTEMLQLCGRFVQKLGDALPEEIREPALRDAQWTFESAVQENISINGQAWQEASDNCFMDSDIKVLEDQFDEIIVDIATKRKQYPRKILECVIKTIKAKQEILKQYHPVVHPLDLKYDPDPAPHMENLKCRGETVAKEISEAMKSLPALIEQGEGFSQVLRMQPVIHLQRIHQEVFSSCHRKPDAKPENFITQIETTPTETASRKTSDMVLKRKQTKDCPQRKWYPLRPKKINLDT.

Position 4 is a phosphoserine (Ser4). Phosphothreonine is present on Thr244.

Component of the MIS12 complex composed of MIS12, DSN1, NSL1/DC8 and PMF1. Interacts with KNL1.

The protein resides in the nucleus. It localises to the chromosome. It is found in the centromere. The protein localises to the kinetochore. Functionally, part of the MIS12 complex which is required for normal chromosome alignment and segregation and kinetochore formation during mitosis. This is Kinetochore-associated protein NSL1 homolog (NSL1) from Homo sapiens (Human).